The sequence spans 1010 residues: Phosphoenolpyruvate carboxylase (1010 aa).

The segment covering 1-18 (MIMRSPETSGASMPQSTA) has biased composition (polar residues). Disordered regions lie at residues 1–36 (MIMR…PGAG) and 132–154 (LRPS…PPLA). Catalysis depends on residues histidine 195 and lysine 652. The interval 967 to 986 (QNRQPPMSESPGTPEDRRTY) is disordered.

It belongs to the PEPCase type 1 family. The cofactor is Mg(2+).

The catalysed reaction is oxaloacetate + phosphate = phosphoenolpyruvate + hydrogencarbonate. Forms oxaloacetate, a four-carbon dicarboxylic acid source for the tricarboxylic acid cycle. The protein is Phosphoenolpyruvate carboxylase of Parasynechococcus marenigrum (strain WH8102).